Here is a 364-residue protein sequence, read N- to C-terminus: DNA replication and repair protein RecF (364 aa).

30-37 contacts ATP; the sequence is GDNAQGKT.

The protein belongs to the RecF family.

The protein localises to the cytoplasm. The RecF protein is involved in DNA metabolism; it is required for DNA replication and normal SOS inducibility. RecF binds preferentially to single-stranded, linear DNA. It also seems to bind ATP. This chain is DNA replication and repair protein RecF, found in Clostridium kluyveri (strain ATCC 8527 / DSM 555 / NBRC 12016 / NCIMB 10680 / K1).